A 395-amino-acid polypeptide reads, in one-letter code: Calcium sensing receptor, chloroplastic (395 aa).

Over residues 1–12 (MAPVPVSVSATL) the composition is skewed to low complexity. Residues 1–27 (MAPVPVSVSATLAPPPAAPPKTTSRSW) form a disordered region. The transit peptide at 1 to 39 (MAPVPVSVSATLAPPPAAPPKTTSRSWERRAPADAAFAA) directs the protein to the chloroplast. At 40-182 (ASSVAGSAAL…TITSLGPEDY (143 aa)) the chain is on the lumenal, thylakoid side. Residues 183–203 (VVAAGXAFLAYLLVPPVWSLV) form a helical membrane-spanning segment. At 204 to 395 (SSSLRGYKGD…TRKLLPGGVD (192 aa)) the chain is on the stromal side. The 122-residue stretch at 224–345 (TTQGYVLIDV…WAQSRLGTDS (122 aa)) folds into the Rhodanese domain. Thr377 bears the Phosphothreonine mark.

Post-translationally, phosphorylated in both bundle sheath and mesophyll cells, under both low and high light regimes (70 vs 900 umol photons/m-2/s).

The protein resides in the plastid. It localises to the chloroplast thylakoid membrane. Its function is as follows. Modulates cytoplasmic Ca(2+) concentration and is crucial for proper stomatal regulation in response to elevated levels of external Ca(2+). May function by regulating concentrations of inositol 1,4,5-trisphosphate (IP3), which in turn triggers release of Ca(2+) from internal stores. May play a role in de-etiolation. The chain is Calcium sensing receptor, chloroplastic from Zea mays (Maize).